Here is a 91-residue protein sequence, read N- to C-terminus: Probable Fe(2+)-trafficking protein (91 aa).

This sequence belongs to the Fe(2+)-trafficking protein family. In terms of assembly, monomer.

Could be a mediator in iron transactions between iron acquisition and iron-requiring processes, such as synthesis and/or repair of Fe-S clusters in biosynthetic enzymes. This Klebsiella pneumoniae (strain 342) protein is Probable Fe(2+)-trafficking protein.